Consider the following 32-residue polypeptide: DNA-binding protein HU (32 aa).

Belongs to the bacterial histone-like protein family.

Its function is as follows. Histone-like DNA-binding protein which is capable of wrapping DNA to stabilize it, and thus to prevent its denaturation under extreme environmental conditions. The protein is DNA-binding protein HU (hup) of Synechocystis sp. (strain PCC 6701).